The sequence spans 242 residues: Type III pantothenate kinase (242 aa).

Asp-7–Lys-14 contributes to the ATP binding site. Substrate contacts are provided by residues Tyr-91 and Gly-98–Arg-101. Asp-100 (proton acceptor) is an active-site residue. Thr-121 is a binding site for ATP. Thr-171 lines the substrate pocket.

It belongs to the type III pantothenate kinase family. As to quaternary structure, homodimer. NH4(+) is required as a cofactor. K(+) serves as cofactor.

The protein resides in the cytoplasm. The catalysed reaction is (R)-pantothenate + ATP = (R)-4'-phosphopantothenate + ADP + H(+). The protein operates within cofactor biosynthesis; coenzyme A biosynthesis; CoA from (R)-pantothenate: step 1/5. Functionally, catalyzes the phosphorylation of pantothenate (Pan), the first step in CoA biosynthesis. This Xylella fastidiosa (strain M23) protein is Type III pantothenate kinase.